The following is a 101-amino-acid chain: Citrate lyase acyl carrier protein (101 aa).

O-(phosphoribosyl dephospho-coenzyme A)serine is present on serine 14.

This sequence belongs to the CitD family. Oligomer with a subunit composition of (alpha,beta,gamma)6.

The protein resides in the cytoplasm. In terms of biological role, covalent carrier of the coenzyme of citrate lyase. In Latilactobacillus sakei subsp. sakei (strain 23K) (Lactobacillus sakei subsp. sakei), this protein is Citrate lyase acyl carrier protein.